An 895-amino-acid chain; its full sequence is Stonin-2 (895 aa).

Disordered regions lie at residues 10-101 (THQS…AISN), 144-204 (ASES…METI), and 236-279 (NEVG…PKST). Over residues 64–73 (SHSEQDDSSE) the composition is skewed to basic and acidic residues. 2 stretches are compositionally biased toward polar residues: residues 145–169 (SESSWTTHSEDTSSPSVAPSYTDLQ) and 179–193 (GRASGTDSTDNSSSL). Phosphoserine is present on residues serine 278, serine 284, and serine 299. Disordered regions lie at residues 291-326 (ISSLNRPPSVTEAPPWRATNPFLNESLQDIQPSPIN) and 386-424 (QIDDPDPVGNAALPDDDPTASVEPDAPSPTSALSQPRDG). Short sequence motifs (NPF) lie at residues 310 to 312 (NPF) and 326 to 328 (NPF). Polar residues predominate over residues 311-323 (PFLNESLQDIQPS). Positions 424–557 (GWPMMLRIPE…DLPVQSMDLS (134 aa)) constitute an SHD domain. The 308-residue stretch at 565–872 (EEEITVDIRD…AHYSYKVEIE (308 aa)) folds into the MHD domain. Position 759 is a phosphoserine (serine 759).

The protein belongs to the Stoned B family. In terms of assembly, interacts with the second C2 domain of synaptotagmins SYT1 and SYT2. Interacts with EPS15, EPS15R and ITSN1. Interacts indirectly with the AP-2 adapter complex. Interacts with TOR1A and COPS4; the interaction controls STON2 protein stability. Phosphorylated in vitro by PKD. In terms of processing, neddylated and ubiquitinated; leading to its degradation and inhibited by TOR1A and COPS4.

The protein localises to the synapse. The protein resides in the synaptosome. It is found in the cytoplasm. Its subcellular location is the membrane. Adapter protein involved in endocytic machinery. Involved in the synaptic vesicle recycling. May facilitate clathrin-coated vesicle uncoating. This is Stonin-2 (Ston2) from Rattus norvegicus (Rat).